A 375-amino-acid polypeptide reads, in one-letter code: tRNA-specific 2-thiouridylase MnmA (375 aa).

Residues 12-19 and M38 contribute to the ATP site; that span reads GMSGGVDS. The interaction with target base in tRNA stretch occupies residues 98–100; that stretch reads NPD. Catalysis depends on C103, which acts as the Nucleophile. A disulfide bridge links C103 with C200. ATP is bound at residue G127. Residues 150 to 152 are interaction with tRNA; the sequence is KDQ. Residue C200 is the Cysteine persulfide intermediate of the active site. The interval 312–313 is interaction with tRNA; sequence RY.

The protein belongs to the MnmA/TRMU family.

Its subcellular location is the cytoplasm. It catalyses the reaction S-sulfanyl-L-cysteinyl-[protein] + uridine(34) in tRNA + AH2 + ATP = 2-thiouridine(34) in tRNA + L-cysteinyl-[protein] + A + AMP + diphosphate + H(+). Its function is as follows. Catalyzes the 2-thiolation of uridine at the wobble position (U34) of tRNA, leading to the formation of s(2)U34. In Lactobacillus gasseri (strain ATCC 33323 / DSM 20243 / BCRC 14619 / CIP 102991 / JCM 1131 / KCTC 3163 / NCIMB 11718 / NCTC 13722 / AM63), this protein is tRNA-specific 2-thiouridylase MnmA.